Consider the following 296-residue polypeptide: Acetylglutamate kinase (296 aa).

Substrate contacts are provided by residues 68-69, Arg-90, and Asn-193; that span reads GG.

Belongs to the acetylglutamate kinase family. ArgB subfamily.

Its subcellular location is the cytoplasm. The enzyme catalyses N-acetyl-L-glutamate + ATP = N-acetyl-L-glutamyl 5-phosphate + ADP. The protein operates within amino-acid biosynthesis; L-arginine biosynthesis; N(2)-acetyl-L-ornithine from L-glutamate: step 2/4. Its function is as follows. Catalyzes the ATP-dependent phosphorylation of N-acetyl-L-glutamate. This is Acetylglutamate kinase from Acidothermus cellulolyticus (strain ATCC 43068 / DSM 8971 / 11B).